A 289-amino-acid polypeptide reads, in one-letter code: 33 kDa chaperonin (289 aa).

Disulfide bonds link Cys-229–Cys-231 and Cys-262–Cys-265.

It belongs to the HSP33 family. In terms of processing, under oxidizing conditions two disulfide bonds are formed involving the reactive cysteines. Under reducing conditions zinc is bound to the reactive cysteines and the protein is inactive.

It is found in the cytoplasm. Its function is as follows. Redox regulated molecular chaperone. Protects both thermally unfolding and oxidatively damaged proteins from irreversible aggregation. Plays an important role in the bacterial defense system toward oxidative stress. This is 33 kDa chaperonin from Pectobacterium atrosepticum (strain SCRI 1043 / ATCC BAA-672) (Erwinia carotovora subsp. atroseptica).